We begin with the raw amino-acid sequence, 201 residues long: Lipopolysaccharide core heptose(II)-phosphate phosphatase (201 aa).

The first 33 residues, 1 to 33 (MLAFTLRFIKNKRYFAILAGALVIIAGLASQHA), serve as a signal peptide directing secretion.

Belongs to the phosphoglycerate mutase family. Ais subfamily.

It localises to the periplasm. It participates in bacterial outer membrane biogenesis; lipopolysaccharide metabolism. Functionally, catalyzes the dephosphorylation of heptose(II) of the outer membrane lipopolysaccharide core. The polypeptide is Lipopolysaccharide core heptose(II)-phosphate phosphatase (Salmonella typhi).